A 912-amino-acid chain; its full sequence is Protein translocase subunit SecA (912 aa).

ATP contacts are provided by residues Gln87, Gly105–Thr109, and Asp512. Zn(2+) contacts are provided by Cys896, Cys898, Cys907, and His908.

This sequence belongs to the SecA family. In terms of assembly, monomer and homodimer. Part of the essential Sec protein translocation apparatus which comprises SecA, SecYEG and auxiliary proteins SecDF-YajC and YidC. It depends on Zn(2+) as a cofactor.

It localises to the cell inner membrane. It is found in the cytoplasm. The catalysed reaction is ATP + H2O + cellular proteinSide 1 = ADP + phosphate + cellular proteinSide 2.. Functionally, part of the Sec protein translocase complex. Interacts with the SecYEG preprotein conducting channel. Has a central role in coupling the hydrolysis of ATP to the transfer of proteins into and across the cell membrane, serving both as a receptor for the preprotein-SecB complex and as an ATP-driven molecular motor driving the stepwise translocation of polypeptide chains across the membrane. This Pseudomonas fluorescens (strain Pf0-1) protein is Protein translocase subunit SecA.